The primary structure comprises 190 residues: Potassium-transporting ATPase KdpC subunit (190 aa).

A helical membrane pass occupies residues 10–30 (TFLFLLLITGGVYPLLTTALG).

This sequence belongs to the KdpC family. In terms of assembly, the system is composed of three essential subunits: KdpA, KdpB and KdpC.

Its subcellular location is the cell inner membrane. In terms of biological role, part of the high-affinity ATP-driven potassium transport (or Kdp) system, which catalyzes the hydrolysis of ATP coupled with the electrogenic transport of potassium into the cytoplasm. This subunit acts as a catalytic chaperone that increases the ATP-binding affinity of the ATP-hydrolyzing subunit KdpB by the formation of a transient KdpB/KdpC/ATP ternary complex. The protein is Potassium-transporting ATPase KdpC subunit of Escherichia coli O45:K1 (strain S88 / ExPEC).